The following is a 297-amino-acid chain: CASP-like protein 2U8 (297 aa).

The Cytoplasmic segment spans residues 1–10; the sequence is MLELYEKRRA. The helical transmembrane segment at 11 to 31 threads the bilayer; that stretch reads LLLLRLAAMFLSLAALLITVL. Topologically, residues 32 to 64 are extracellular; sequence NREDGFFSINVFGSPQPILAKATADFTLVKGLK. The chain crosses the membrane as a helical span at residues 65–85; sequence FFAGAMGIVAGYSFLQLAIAM. The Cytoplasmic segment spans residues 86 to 101; the sequence is ASIFSGAPSILGGKRM. The helical transmembrane segment at 102–122 threads the bilayer; the sequence is AWLCFVGDMTASHLCAAAAAV. Over 123 to 148 the chain is Extracellular; that stretch reads SAQLAYLGKRGAPMWSAVCTYFSHYC. Residues 149–169 form a helical membrane-spanning segment; the sequence is LVFGLAVILAFLATLAALLVA. Topologically, residues 170–297 are cytoplasmic; that stretch reads SISSYHLAYD…RVLEMETPCK (128 aa).

The protein belongs to the Casparian strip membrane proteins (CASP) family. As to quaternary structure, homodimer and heterodimers.

The protein localises to the cell membrane. This is CASP-like protein 2U8 from Selaginella moellendorffii (Spikemoss).